A 303-amino-acid chain; its full sequence is N-acetyl-D-glucosamine kinase (303 aa).

Residues G4–K11 and G133–L140 each bind ATP. The Zn(2+) site is built by H157, C177, C179, and C184.

Belongs to the ROK (NagC/XylR) family. NagK subfamily.

It carries out the reaction N-acetyl-D-glucosamine + ATP = N-acetyl-D-glucosamine 6-phosphate + ADP + H(+). It functions in the pathway cell wall biogenesis; peptidoglycan recycling. Its function is as follows. Catalyzes the phosphorylation of N-acetyl-D-glucosamine (GlcNAc) derived from cell-wall degradation, yielding GlcNAc-6-P. This Salmonella choleraesuis (strain SC-B67) protein is N-acetyl-D-glucosamine kinase.